The following is a 333-amino-acid chain: tRNA N6-adenosine threonylcarbamoyltransferase (333 aa).

Fe cation contacts are provided by His111 and His115. Substrate is bound by residues 134 to 138 (LVSGG), Asp167, Gly180, and Asn272. Asp300 contacts Fe cation.

The protein belongs to the KAE1 / TsaD family. Fe(2+) serves as cofactor.

It localises to the cytoplasm. It catalyses the reaction L-threonylcarbamoyladenylate + adenosine(37) in tRNA = N(6)-L-threonylcarbamoyladenosine(37) in tRNA + AMP + H(+). Its function is as follows. Required for the formation of a threonylcarbamoyl group on adenosine at position 37 (t(6)A37) in tRNAs that read codons beginning with adenine. Is involved in the transfer of the threonylcarbamoyl moiety of threonylcarbamoyl-AMP (TC-AMP) to the N6 group of A37, together with TsaE and TsaB. TsaD likely plays a direct catalytic role in this reaction. This chain is tRNA N6-adenosine threonylcarbamoyltransferase, found in Legionella pneumophila (strain Corby).